A 490-amino-acid polypeptide reads, in one-letter code: Scarecrow-like transcription factor PAT1 (490 aa).

Residues 110 to 490 (TLEAISRRDL…RDLVASCAWK (381 aa)) enclose the GRAS domain. Residues 117-178 (RDLRADLVSC…AQLASSGSSI (62 aa)) form a leucine repeat I (LRI) region. A VHIID region spans residues 197 to 262 (MHILYEVCPY…GGPPRIRITG (66 aa)). Residues 228–232 (VHIID) carry the VHIID motif. Residues 278–310 (IVGNRLAKLAKQFNVPFEFNSVSVSVSEVKPKN) form a leucine repeat II (LRII) region. The tract at residues 319–413 (LAVNFAFVLH…QHCLARDVVN (95 aa)) is PFYRE. Residues 416 to 490 (ACEGADRVER…RDLVASCAWK (75 aa)) are SAW.

The protein belongs to the GRAS family.

It localises to the cytoplasm. Its function is as follows. Probable transcription factor involved in phytochrome A (phyA) signal transduction. The polypeptide is Scarecrow-like transcription factor PAT1 (PAT1) (Arabidopsis thaliana (Mouse-ear cress)).